An 83-amino-acid polypeptide reads, in one-letter code: Large ribosomal subunit protein eL31 (83 aa).

The protein belongs to the eukaryotic ribosomal protein eL31 family.

This Methanococcus aeolicus (strain ATCC BAA-1280 / DSM 17508 / OCM 812 / Nankai-3) protein is Large ribosomal subunit protein eL31.